A 25-amino-acid polypeptide reads, in one-letter code: Caerin-1.19 (25 aa).

A Leucine amide modification is found at leucine 25.

Belongs to the frog skin active peptide (FSAP) family. Caerin subfamily. As to expression, expressed by the skin dorsal glands.

It localises to the secreted. Its function is as follows. Caerin-1.19 shows significant activity against Gram-positive organisms, but is less effective against Gram-negative organisms. This is Caerin-1.19 from Ranoidea gracilenta (Dainty green tree frog).